The sequence spans 902 residues: 26S proteasome regulatory subunit rpn-1 (902 aa).

A compositionally biased stretch (basic and acidic residues) spans 1 to 41; sequence MAQESDLSKTADKGKGKAVDDEKKHQDVDGKTPANGKKEEE. The disordered stretch occupies residues 1 to 54; sequence MAQESDLSKTADKGKGKAVDDEKKHQDVDGKTPANGKKEEEQNASEELSEEDQQ. Residues 42–52 are compositionally biased toward acidic residues; sequence QNASEELSEED. 8 PC repeats span residues 415–448, 449–487, 488–522, 525–559, 568–601, 645–680, 681–715, and 716–750; these read STVA…QIQA, GAYL…LIRV, ATIM…SMQV, MAAL…GSRL, ALGL…KPTA, AVLG…NIRR, AVPL…EVAI, and NAIF…DQES.

The protein belongs to the proteasome subunit S2 family.

In terms of biological role, acts as a regulatory subunit of the 26 proteasome which is involved in the ATP-dependent degradation of ubiquitinated proteins. This Neurospora crassa (strain ATCC 24698 / 74-OR23-1A / CBS 708.71 / DSM 1257 / FGSC 987) protein is 26S proteasome regulatory subunit rpn-1 (rpn-1).